The following is a 938-amino-acid chain: ATP-dependent RNA helicase DDX42 (938 aa).

The segment covering 1–18 has biased composition (gly residues); the sequence is MNWNKGGPGTKRGFGFGG. Residues 1–114 are disordered; sequence MNWNKGGPGT…KPVDSDSDDD (114 aa). Position 5 is an N6-acetyllysine (K5). R12 carries the omega-N-methylarginine modification. The segment covering 35 to 52 has biased composition (low complexity); that stretch reads SHSAFGATSSSSGFGKSA. S58 carries the phosphoserine modification. The span at 70–84 shows a compositional bias: acidic residues; the sequence is DEENAYFEDEEEDSS. S96, S104, S109, and S111 each carry phosphoserine. The stretch at 116-157 forms a coiled coil; sequence LEAFMAEVEDQAARDMKRLEEKDKERKNVKGIRDDIEEEDDQ. The disordered stretch occupies residues 182-203; it reads EYDSDGNPIAPTKKIIDPLPPI. At S185 the chain carries Phosphoserine. Positions 253–281 match the Q motif motif; that stretch reads SSFAHFGFDEQLMHQIRKSEYTQPTPIQC. Positions 284–459 constitute a Helicase ATP-binding domain; sequence VPVALSGRDM…RDILIDPIRV (176 aa). 297 to 304 is an ATP binding site; the sequence is AKTGSGKT. The short motif at 407–410 is the DEAD box element; the sequence is DEAD. The 146-residue stretch at 487 to 632 folds into the Helicase C-terminal domain; the sequence is WLTRRLVEFT…HVSKELLDLA (146 aa). 2 stretches are compositionally biased toward polar residues: residues 737 to 757 and 786 to 798; these read LNSV…SPVT and GVNN…NSRE. Positions 737 to 938 are disordered; sequence LNSVPTNSAQ…PKRKKSRWDS (202 aa). Positions 738-833 are necessary for interaction with TP53BP2; sequence NSVPTNSAQQ…TGNRHSDSPR (96 aa). Phosphoserine is present on S754. Over residues 820–920 the composition is skewed to basic and acidic residues; the sequence is SHGETGNRHS…KVDSKTDKTA (101 aa). Residue K899 forms a Glycyl lysine isopeptide (Lys-Gly) (interchain with G-Cter in SUMO2) linkage.

Belongs to the DEAD box helicase family. DDX42 subfamily. In terms of assembly, transient component of the SF3B subcomplex of the 17S U2 SnRNP complex. Interacts (via the C-terminus) with TP53BP2; the interaction is not inhibitied by TP53BP2 ubiquitination and is independent of p53/TP53. Expressed in several cell lines (at protein level). Expressed in liver, lung, tonsil, thymus, muscle and pancreatic islets.

The protein localises to the cytoplasm. It is found in the nucleus. Its subcellular location is the cajal body. The protein resides in the nucleus speckle. The enzyme catalyses ATP + H2O = ADP + phosphate + H(+). Its function is as follows. ATP-dependent RNA helicase that binds to partially double-stranded RNAs (dsRNAs) in order to unwind RNA secondary structures. Unwinding is promoted in the presence of single-strand binding proteins. Also mediates RNA duplex formation thereby displacing the single-strand RNA binding protein. ATP and ADP modulate its activity: ATP binding and hydrolysis by DDX42 triggers RNA strand separation, whereas the ADP-bound form of the protein triggers annealing of complementary RNA strands. Required for assembly of the 17S U2 SnRNP complex of the spliceosome, a large ribonucleoprotein complex that removes introns from transcribed pre-mRNAs: DDX42 associates transiently with the SF3B subcomplex of the 17S U2 SnRNP complex and is released after fulfilling its role in the assembly of 17S U2 SnRNP. Involved in the survival of cells by interacting with TP53BP2 and thereby counteracting the apoptosis-stimulating activity of TP53BP2. Relocalizes TP53BP2 to the cytoplasm. This Homo sapiens (Human) protein is ATP-dependent RNA helicase DDX42.